A 118-amino-acid chain; its full sequence is uncharacterized protein (118 aa).

An N-terminal signal peptide occupies residues Met-1–Ala-18. N-linked (GlcNAc...) asparagine; by host glycosylation is present at Asn-24.

This is an uncharacterized protein from Magallana gigas (Pacific oyster).